The following is a 231-amino-acid chain: Homeobox protein engrailed-1a (231 aa).

3 disordered regions span residues 1-29, 43-105, and 121-148; these read MEDQ…AHRN, GCKR…KDSQ, and DRPS…RPRT. The segment covering 43–56 has biased composition (basic and acidic residues); the sequence is GCKRERERVTRDSG. Low complexity predominate over residues 68 to 102; sequence DGVSSSASSTVSSPVSSRQSNKVEQGSSKSSSPSK. The homeobox DNA-binding region spans 143 to 202; it reads DKRPRTAFTAEQLQRLKAEFQTSRYITEQRRQALARELGLNESQIKIWFQNKRAKIKKSS.

The protein belongs to the engrailed homeobox family.

It is found in the nucleus. This chain is Homeobox protein engrailed-1a (eng1a), found in Danio rerio (Zebrafish).